We begin with the raw amino-acid sequence, 345 residues long: Glycerol-3-phosphate dehydrogenase [NAD(P)+] (345 aa).

NADPH is bound by residues Ser-23, Tyr-24, His-44, and Lys-118. Sn-glycerol 3-phosphate is bound by residues Lys-118, Gly-147, and Thr-149. Position 151 (Ala-151) interacts with NADPH. The sn-glycerol 3-phosphate site is built by Lys-203, Asp-256, Ser-266, Arg-267, and Asn-268. The Proton acceptor role is filled by Lys-203. NADPH is bound at residue Arg-267. Residues Val-291 and Glu-293 each coordinate NADPH.

The protein belongs to the NAD-dependent glycerol-3-phosphate dehydrogenase family.

The protein resides in the cytoplasm. The enzyme catalyses sn-glycerol 3-phosphate + NAD(+) = dihydroxyacetone phosphate + NADH + H(+). It carries out the reaction sn-glycerol 3-phosphate + NADP(+) = dihydroxyacetone phosphate + NADPH + H(+). Its pathway is membrane lipid metabolism; glycerophospholipid metabolism. In terms of biological role, catalyzes the reduction of the glycolytic intermediate dihydroxyacetone phosphate (DHAP) to sn-glycerol 3-phosphate (G3P), the key precursor for phospholipid synthesis. The polypeptide is Glycerol-3-phosphate dehydrogenase [NAD(P)+] (Vibrio campbellii (strain ATCC BAA-1116)).